An 806-amino-acid chain; its full sequence is Lysine-specific demethylase JMJ15 (806 aa).

A disordered region spans residues 1–43 (MEPFSAAQNKEDKDTSVEPPRRRCHRKNKGTNVEPPSSPYHPK). The span at 9-21 (NKEDKDTSVEPPR) shows a compositional bias: basic and acidic residues. The JmjN domain occupies 61–102 (APVFHPTSEEFEDTLAYIEKIRPLAESFGICRIVPPSNWSPP). Positions 128-176 (NRGPVKKKTPKGRKRKRGKYSRTVAPKKRNGSVSKSVSTPKATEEENFG) are disordered. The segment covering 131-157 (PVKKKTPKGRKRKRGKYSRTVAPKKRN) has biased composition (basic residues). Residues 132-139 (VKKKTPKG) carry the Nuclear localization signal motif. The segment covering 158–168 (GSVSKSVSTPK) has biased composition (polar residues). A JmjC domain is found at 261–427 (KYISSGWNLN…HGQNAVEIYS (167 aa)). The Fe cation site is built by H307, E309, and H395. Zn(2+) is bound by residues C514, C517, C528, C531, C539, H542, C545, and C547. A C5HC2 zinc finger spans residues 514-566 (CISCFSDLHLSATGCKNCSSLEEYGCTKHDICSCEGKDRFIFLRYTIDELSSL). One can recognise an FYR N-terminal domain in the interval 629-687 (IMDLAAYHVEPINLGFLVVGKLWCNKHAIFPKGFKSRVKFYNVQDPMRISYYVSEIVDA). The 87-residue stretch at 689–775 (LLGPLFKVTL…HGQVEYWNHK (87 aa)) folds into the FYR C-terminal domain.

The protein belongs to the JARID1 histone demethylase family. It depends on Fe(2+) as a cofactor. Expressed in roots, cotyledons, shoot apex, rosette and cauline leaves, stems, inflorescences and siliques. Expressed at low levels during vegetative growth but to higher levels in young floral organs.

It is found in the nucleus. The enzyme catalyses N(6),N(6),N(6)-trimethyl-L-lysyl(4)-[histone H3] + 2-oxoglutarate + O2 = N(6),N(6)-dimethyl-L-lysyl(4)-[histone H3] + formaldehyde + succinate + CO2. In terms of biological role, histone demethylase that demethylates 'Lys-4' (H3K4me) of histone H3 with a specific activity for H3K4me3. No activity on H3K4me2, H3K4me1, H3K9me3/2, H3K27me3/2 and H3K36me3/2. Involved in the control of flowering time by demethylating H3K4me3 at the FLC locus and repressing its expression. The repression of FLC level and reduction in H3K4me3 at the FLC locus results in induction of the flowering activator FT, which is a downstream target of FLC. Promotes salt tolerance by down-regulating the expression of several transcriptions factors involved in stress responses via H3K4me3 and H3K4me2 demethylation. This Arabidopsis thaliana (Mouse-ear cress) protein is Lysine-specific demethylase JMJ15.